We begin with the raw amino-acid sequence, 81 residues long: Large ribosomal subunit protein eL31 (81 aa).

It belongs to the eukaryotic ribosomal protein eL31 family.

The sequence is that of Large ribosomal subunit protein eL31 (rpl31e) from Methanothermobacter thermautotrophicus (strain ATCC 29096 / DSM 1053 / JCM 10044 / NBRC 100330 / Delta H) (Methanobacterium thermoautotrophicum).